The following is a 374-amino-acid chain: O-methyltransferase 16 (374 aa).

Residues S195, G219, D242, D262, and K276 each contribute to the S-adenosyl-L-homocysteine site. S-adenosyl-L-methionine is bound at residue D242. Catalysis depends on H280, which acts as the Proton acceptor.

The protein belongs to the class I-like SAM-binding methyltransferase superfamily. Cation-independent O-methyltransferase family. Homodimer. In terms of tissue distribution, expressed mainly in vasculature and cortex tissues at low levels.

The catalysed reaction is dopamine + S-adenosyl-L-methionine = 4-methoxytyramine + S-adenosyl-L-homocysteine + H(+). It functions in the pathway aromatic compound metabolism. The protein operates within alkaloid biosynthesis. O-methyltransferase participating in the biosynthesis of natural products derived from phenylethylamine, including mescaline, a natural hallucinogen potentially used in psychotherapeutic treatments. Catalyzes the O-methylation of dopamine to produce 4-methoxytyramine. This is O-methyltransferase 16 from Lophophora williamsii (Peyote).